A 910-amino-acid polypeptide reads, in one-letter code: Coatomer subunit beta'-2 (910 aa).

9 WD repeats span residues 13–52 (QRSERVKSVDLHPTEPWILSSLYSGSVCIWNYQTQTMVKS), 55–94 (VTELPVRSSKFIARKQWIVAGADDMFIRVYNYNTMDKVKV), 97–136 (AHTDYIRCVAVHPTQPFVLSSSDDMLIKLWDWDKGWMCTQ), 140–180 (GHSH…PNFT), 183–224 (GHSK…CVQT), 227–266 (GHAHNVSAVCFHPELPITLTGSEDGTVRLWHSTTYRLENT), 269–309 (YGLE…ASMD), 351–393 (TCDL…GSAL), and 461–501 (RIDV…SHLD). The disordered stretch occupies residues 882 to 910 (ADGSTDGAVLVNGNDTEEQWGTNNEESSA). Polar residues predominate over residues 900–910 (QWGTNNEESSA).

The protein belongs to the WD repeat COPB2 family. Oligomeric complex that consists of at least the alpha, beta, beta', gamma, delta, epsilon and zeta subunits.

It localises to the cytoplasm. The protein localises to the golgi apparatus membrane. It is found in the cytoplasmic vesicle. The protein resides in the COPI-coated vesicle membrane. In terms of biological role, the coatomer is a cytosolic protein complex that binds to dilysine motifs and reversibly associates with Golgi non-clathrin-coated vesicles, which further mediate biosynthetic protein transport from the ER, via the Golgi up to the trans Golgi network. Coatomer complex is required for budding from Golgi membranes, and is essential for the retrograde Golgi-to-ER transport of dilysine-tagged proteins. The protein is Coatomer subunit beta'-2 of Oryza sativa subsp. japonica (Rice).